Reading from the N-terminus, the 961-residue chain is Lon protease homolog, mitochondrial (961 aa).

The transit peptide at 1 to 67 (MAGGTGCVRL…SPAAAGHWRG (67 aa)) directs the protein to the mitochondrion. Disordered stretches follow at residues 76–103 (GGGA…GSAG) and 220–262 (QLEV…VVVG). The Lon N-terminal domain maps to 125–371 (LPLIAVTRNP…KALSLLKKEF (247 aa)). The span at 235 to 244 (KLRKKPKRGK) shows a compositional bias: basic residues. Positions 245 to 257 (KEAEEDGATKRPL) are enriched in basic and acidic residues. An ATP-binding site is contributed by 524–531 (GPPGVGKT). Residues 760 to 951 (VTPPGVVMGL…REIFDIAFPE (192 aa)) enclose the Lon proteolytic domain. Residues 784-801 (SLRRPRDRDSDKGDKDGS) are compositionally biased toward basic and acidic residues. Residues 784–803 (SLRRPRDRDSDKGDKDGSLE) form a disordered region. Residues serine 857 and lysine 900 contribute to the active site.

It belongs to the peptidase S16 family. Homohexamer. Organized in a ring with a central cavity. The ATP-binding and proteolytic domains (AP-domain) form a hexameric chamber, while the N-terminal domain is arranged as a trimer of dimers. DNA and RNA binding is stimulated by substrate and inhibited by ATP binding. Interacts with TWNK and mitochondrial DNA polymerase subunit POLG.

It localises to the mitochondrion matrix. It catalyses the reaction Hydrolysis of proteins in presence of ATP.. Its function is as follows. ATP-dependent serine protease that mediates the selective degradation of misfolded, unassembled or oxidatively damaged polypeptides as well as certain short-lived regulatory proteins in the mitochondrial matrix. Endogenous substrates include mitochondrial steroidogenic acute regulatory (StAR) protein, DELE1, helicase Twinkle (TWNK) and the large ribosomal subunit protein MRPL32/bL32m. MRPL32/bL32m is protected from degradation by LONP1 when it is bound to a nucleic acid (RNA), but TWNK is not. May also have a chaperone function in the assembly of inner membrane protein complexes. Participates in the regulation of mitochondrial gene expression and in the maintenance of the integrity of the mitochondrial genome. Binds to mitochondrial promoters and RNA in a single-stranded, site-specific, and strand-specific manner. May regulate mitochondrial DNA replication and/or gene expression using site-specific, single-stranded DNA binding to target the degradation of regulatory proteins binding to adjacent sites in mitochondrial promoters. The sequence is that of Lon protease homolog, mitochondrial from Bos taurus (Bovine).